The sequence spans 836 residues: Zinc fingers and homeoboxes protein 2 (836 aa).

Residues 24–58 are disordered; that stretch reads LEEADRAKDKGLGVPPSDVSKERWAAEPEPSSKES. The tract at residues 27-77 is interaction with EFNB1; that stretch reads ADRAKDKGLGVPPSDVSKERWAAEPEPSSKESEVVEVRSVGESQSKKLQGG. Residues 42–58 show a composition bias toward basic and acidic residues; that stretch reads VSKERWAAEPEPSSKES. 2 consecutive C2H2-type zinc fingers follow at residues 78–101 and 110–133; these read YECK…DMQH and YVCA…SKFH. The interval 168–210 is disordered; it reads SAPGSSDNDPGVSVGKTATVKTGKQKADAKKVPKKPDEAAPDN. Residues 192 to 210 show a composition bias toward basic and acidic residues; sequence QKADAKKVPKKPDEAAPDN. Residues 195 to 358 are required for homodimerization; the sequence is DAKKVPKKPD…PAQLTPTKVS (164 aa). DNA-binding regions (homeobox) lie at residues 263-324, 439-501, 530-591, and 628-690; these read NTTK…WSPE, TPAS…IVHI, AQKF…EQAV, and SPSS…TLSW. Positions 263–446 are required for repressor activity; that stretch reads NTTKYNSALD…PLTPASDRKK (184 aa). The tract at residues 263–497 is required for interaction with NFYA; it reads NTTKYNSALD…SDHRYRCQRG (235 aa). A required for nuclear localization region spans residues 317–446; it reads HGISWSPEEV…PLTPASDRKK (130 aa). The disordered stretch occupies residues 404-442; the sequence is GQKRPLVTPQAAPEPKRPHIAQVPEPPPKVANTPLTPAS. A Glycyl lysine isopeptide (Lys-Gly) (interchain with G-Cter in SUMO2) cross-link involves residue lysine 455. 2 stretches are compositionally biased toward basic and acidic residues: residues 700–709 and 730–746; these read SDDHGHDVAS and YAKD…EKLV. The disordered stretch occupies residues 700 to 836; it reads SDDHGHDVAS…DSTPAEAGQA (137 aa). Serine 824 and serine 826 each carry phosphoserine.

This sequence belongs to the ZHX family. Homodimer (via homeobox domain 1). Heterodimer with ZHX1 (via homeobox domain 1). Heterodimer with ZHX3 (via homeobox domain 1). Heterodimerization with ZHX1 is not necessary for repressor activity. Interacts (via homeobox domain) with NFYA (via N-terminus). Interacts with EFNB1 intracellular domain peptide; the interaction enhances ZHX2 transcriptional repression activity.

The protein resides in the nucleus. Acts as a transcriptional repressor. Represses the promoter activity of the CDC25C gene stimulated by NFYA. May play a role in retinal development where it regulates the composition of bipolar cell populations, by promoting differentiation of bipolar OFF-type cells. In the brain, may promote maintenance and suppress differentiation of neural progenitor cells in the developing cortex. In Rattus norvegicus (Rat), this protein is Zinc fingers and homeoboxes protein 2 (Zhx2).